A 663-amino-acid polypeptide reads, in one-letter code: Probable serine/threonine-protein kinase DDB_G0283301 (663 aa).

Residues 312-586 enclose the Protein kinase domain; it reads IERRNELGRG…EECVERLITL (275 aa). ATP-binding positions include 318–326 and K348; that span reads LGRGGNGTV. Catalysis depends on D440, which acts as the Proton acceptor.

The protein belongs to the protein kinase superfamily. Ser/Thr protein kinase family.

It catalyses the reaction L-seryl-[protein] + ATP = O-phospho-L-seryl-[protein] + ADP + H(+). The catalysed reaction is L-threonyl-[protein] + ATP = O-phospho-L-threonyl-[protein] + ADP + H(+). The polypeptide is Probable serine/threonine-protein kinase DDB_G0283301 (Dictyostelium discoideum (Social amoeba)).